The primary structure comprises 138 residues: Acid shock protein (138 aa).

The N-terminal stretch at 1–21 (MKKVLALIVAATMGLSSVAFA) is a signal peptide. A propeptide spanning residues 22 to 85 (ADAVAPAAAA…TKKAPAQKAQ (64 aa)) is cleaved from the precursor. A compositionally biased stretch (low complexity) spans 31–50 (APAATTTAAPAAAATKAPAK). Residues 31 to 138 (APAATTTAAP…ATKKAAPAAK (108 aa)) form a disordered region. Basic residues-rich tracts occupy residues 51-77 (ATHH…KATK) and 122-131 (AAKKHHKATK).

It belongs to the Asr family. Proteolytic processing gives rise to the active protein.

It is found in the periplasm. Its function is as follows. Required for growth and/or survival at acidic conditions. The sequence is that of Acid shock protein from Serratia proteamaculans (strain 568).